We begin with the raw amino-acid sequence, 147 residues long: Hemoglobin subunit beta (147 aa).

Valine 2 bears the N-acetylvaline mark. One can recognise a Globin domain in the interval 3 to 147; it reads HLTGEEKAAV…VANALAHKYH (145 aa). Threonine 13 bears the Phosphothreonine mark. Serine 45 is subject to Phosphoserine. Lysine 60 carries the N6-acetyllysine modification. Residue histidine 64 participates in heme b binding. At lysine 83 the chain carries N6-acetyllysine. Histidine 93 is a heme b binding site. Position 94 is an S-nitrosocysteine (cysteine 94). Residue lysine 145 is modified to N6-acetyllysine.

Belongs to the globin family. As to quaternary structure, heterotetramer of two alpha chains and two beta chains. Red blood cells.

Functionally, involved in oxygen transport from the lung to the various peripheral tissues. This Ailuropoda melanoleuca (Giant panda) protein is Hemoglobin subunit beta (HBB).